We begin with the raw amino-acid sequence, 380 residues long: Acyl-lipid (9+3)-(E)-desaturase (380 aa).

Positions 1–25 (MGAGGCISVSETKPNQKNSLERAPY) are disordered. A compositionally biased stretch (polar residues) spans 9-18 (VSETKPNQKN). The next 2 membrane-spanning stretches (helical) occupy residues 52-72 (LSYVASDLTVAFLLYHATTYF) and 81-101 (ALAWLAYWVAQGCVLTGVWVI). The Histidine box-1 signature appears at 103-107 (HECGH). The Histidine box-2 motif lies at 139–143 (HRRHH). Helical transmembrane passes span 177–197 (IGVLFITLTLGWPLYLTFNVS), 223–243 (IYLSDIGIVITSLVLLRAAMV), and 247–267 (VWLICVYGVPLMITNGFLVLV). The Histidine box-3 motif lies at 313-317 (HIVHH).

This sequence belongs to the fatty acid desaturase type 1 family.

It is found in the membrane. The enzyme catalyses a (9Z)-octadecenoyl-containing glycerolipid + 2 Fe(II)-[cytochrome b5] + O2 + 2 H(+) = a (9Z,12E)-octadecadienoyl-containing glycerolipid + 2 Fe(III)-[cytochrome b5] + 2 H2O. The catalysed reaction is a (9Z)-hexadecenoyl-containing glycerolipid + 2 Fe(II)-[cytochrome b5] + O2 + 2 H(+) = a (9Z,12E)-hexadecadienoyl-containing glycerolipid + 2 Fe(III)-[cytochrome b5] + 2 H2O. Involved in the biosynthesis of dimorphecolic acid (9-OH-18:2(10E,12E)). Converts oleic acid (18:1(9Z)) into 18:2(9Z,12E) and probably palmitoleic acid (16:1(9Z)) into 16:2(9Z,12E). Very limited ability to catalyze (Z)-delta(12) desaturation. The protein is Acyl-lipid (9+3)-(E)-desaturase of Dimorphotheca sinuata (African daisy).